The sequence spans 310 residues: Small ribosomal subunit biogenesis GTPase RsgA (310 aa).

The region spanning 77 to 236 is the CP-type G domain; sequence KNELKRPNIA…IADTPGFSKL (160 aa). GTP is bound by residues 126-129 and 179-187; these read SKID and GQTGVGKST. Positions 260, 266, 268, and 274 each coordinate Zn(2+).

This sequence belongs to the TRAFAC class YlqF/YawG GTPase family. RsgA subfamily. Monomer. Associates with 30S ribosomal subunit, binds 16S rRNA. Zn(2+) serves as cofactor.

It localises to the cytoplasm. Its function is as follows. One of several proteins that assist in the late maturation steps of the functional core of the 30S ribosomal subunit. Helps release RbfA from mature subunits. May play a role in the assembly of ribosomal proteins into the subunit. Circularly permuted GTPase that catalyzes slow GTP hydrolysis, GTPase activity is stimulated by the 30S ribosomal subunit. This chain is Small ribosomal subunit biogenesis GTPase RsgA, found in Phytoplasma australiense.